Reading from the N-terminus, the 464-residue chain is Citrate synthase, mitochondrial (464 aa).

A mitochondrion-targeting transit peptide spans 1-27 (MALLTAAARLFGAKNASCLVLAARHAS). The SIFI-degron motif lies at 2 to 21 (ALLTAAARLFGAKNASCLVL). Position 76 is an N6-acetyllysine; alternate (Lys-76). At Lys-76 the chain carries N6-succinyllysine; alternate. 2 positions are modified to N6-succinyllysine: Lys-103 and Lys-193. Phosphoserine is present on Ser-226. The active site involves His-301. N6-acetyllysine; alternate is present on residues Lys-321 and Lys-327. N6-succinyllysine; alternate is present on residues Lys-321 and Lys-327. His-347 is an active-site residue. Position 356 (Arg-356) interacts with oxaloacetate. Lys-375 is subject to N6-acetyllysine; alternate. Position 375 is an N6-succinyllysine; alternate (Lys-375). At Lys-382 the chain carries N6-acetyllysine. Lys-393 carries the N6-acetyllysine; alternate modification. Lys-393 carries the post-translational modification N6-succinyllysine; alternate. Lys-395 bears the N6,N6,N6-trimethyllysine mark. Asp-402 is an active-site residue. 2 residues coordinate oxaloacetate: Arg-428 and Arg-448. Lys-450 carries the N6-succinyllysine modification. N6-acetyllysine; alternate is present on Lys-459. Lys-459 is subject to N6-succinyllysine; alternate.

Belongs to the citrate synthase family. Homodimer. In terms of processing, methylated. Trimethylation at Lys-395 by CSKMT decreases citrate synthase activity. Post-translationally, in response to mitochondrial stress, the precursor protein is ubiquitinated by the SIFI complex in the cytoplasm before mitochondrial import, leading to its degradation. Within the SIFI complex, UBR4 initiates ubiquitin chain that are further elongated or branched by KCMF1.

Its subcellular location is the mitochondrion matrix. The catalysed reaction is oxaloacetate + acetyl-CoA + H2O = citrate + CoA + H(+). It functions in the pathway carbohydrate metabolism; tricarboxylic acid cycle; isocitrate from oxaloacetate: step 1/2. Its function is as follows. Key enzyme of the Krebs tricarboxylic acid cycle which catalyzes the synthesis of citrate from acetyl coenzyme A and oxaloacetate. The sequence is that of Citrate synthase, mitochondrial (CS) from Sus scrofa (Pig).